Consider the following 397-residue polypeptide: MSGQVGDLSPSQEKSLAQFRENIQDVLSALPNPDDYFLLRWLQARSFDLQKSEDMLRKHMEFRKQQDLANILAWQPPEVVRLYNANGICGHDGEGSPVWYHIVGSLDPKGLLLSASKQELLRDSFRSCELLLRECELQSQKLGKRVEKIIAIFGLEGLGLRDLWKPGIELLQEFFSALEANYPEILKSLIVVRAPKLFAVAFNLVKSYMSEETRRKVVILGDNWKQELTKFISPDQLPVEFGGTMTDPDGNPKCLTKINYGGEVPKSYYLCKQVRLQYEHTRSVGRGSSLQVENEILFPGCVLRWQFASDGGDIGFGVFLKTKMGERQRAREMTEVLPSQRYNAHMVPEDGILTCLQAGSYVLRFYNTYSLVHSKRISYTVEVLLPDQTFMEKMEKF.

The region spanning 76–249 (PPEVVRLYNA…EFGGTMTDPD (174 aa)) is the CRAL-TRIO domain. Positions 252 to 383 (PKCLTKINYG…SKRISYTVEV (132 aa)) constitute a GOLD domain.

This is SEC14-like protein 6 (SEC14L6) from Homo sapiens (Human).